The following is a 149-amino-acid chain: UPF0260 protein PSPPH_1551 (149 aa).

This sequence belongs to the UPF0260 family.

The protein is UPF0260 protein PSPPH_1551 of Pseudomonas savastanoi pv. phaseolicola (strain 1448A / Race 6) (Pseudomonas syringae pv. phaseolicola (strain 1448A / Race 6)).